Reading from the N-terminus, the 250-residue chain is Phosphoribosylaminoimidazole-succinocarboxamide synthase (250 aa).

Belongs to the SAICAR synthetase family.

The catalysed reaction is 5-amino-1-(5-phospho-D-ribosyl)imidazole-4-carboxylate + L-aspartate + ATP = (2S)-2-[5-amino-1-(5-phospho-beta-D-ribosyl)imidazole-4-carboxamido]succinate + ADP + phosphate + 2 H(+). It participates in purine metabolism; IMP biosynthesis via de novo pathway; 5-amino-1-(5-phospho-D-ribosyl)imidazole-4-carboxamide from 5-amino-1-(5-phospho-D-ribosyl)imidazole-4-carboxylate: step 1/2. In Synechococcus sp. (strain CC9605), this protein is Phosphoribosylaminoimidazole-succinocarboxamide synthase.